The chain runs to 1771 residues: MAISSTADLAPSRKARGSESNDRALKLFIELLSVETQQQLFRGEPCIQRFVEIGPRTILSTMAKRSASIQKDQRSSASCYSPEFLSYHDNQPEILYQYQNDQAIYPLSQPTQPQFEPTSPSHLTKRSPSPSKALPMSAIPSAELTLQAGHVILAMTAQKLRRRFDQVPVEKTIRDLSGGKSTLQNELTGDLVAEFGRVPEGVEDQPLSSLAESFQPEFSGIPGKAMSTLISRFISGKMPAGFNQSAIQEYLNSRWGLTKSHATIPLCFAPTMEPARRLANADEARAYLDDLVEKHAAFQGISLVPSNQVADGHESLAPVVMNVADVDEMNKRTKLYRAQFDSLASYLGVDYFASEKAMSESESRIAELEETIRLLNTELDEQFIKGIKPSFNIKQVRKYDSWWNWSREELIRLLNEICQDSSSACPPDMENRLQNLLNKWDANCSEIVRAHLIGLQSRSSAPMNKLQLILEEIFTLGNQTLSIDPLFVHNLPPMGPQTIITDAGCLEYHELPRQISHYPEAMAYGPPWPQGHTSAPFIHIKTREDGQDWMYDSKATSIYHAMLDVGVTTGLTFTHKAVLVTGAGPSSIAASVIQGLLSGGARIIVTTSRSISQSADFYQQMYRQYGAKGSSLSLFPFNQASKQDCEQLVQHIYGPDSPTDGDLDYILPFAAIPQVGEPDAFGGRQELALRAMLVNILRLIGFVRQEKERLRIENRPTMIVLPMSCNEGTFGGDGLYSEAKIGLKALFNRFYSENWSKYLTICGAVIGWTRGTAIMQTSNAVAEEVEKLGVITFTQAEMAFNILALMTPALTALAEDTPIYADLTGGLGSMWNIKQEISAARKRISERQILQIAIAEEDAREQAMICSASTDVESGLPTTRHARLGLQFPPLPDVNEGYPNIEGMIDLTRIPVIVGYSELGPWGNARTRWEIEHRGDFSLEGYIEMAWIMGLIKHVDGHAKGRPYVGWVDADTETPIQDYEVPHKYHKHIMAHAGLRLIKPTKLDSYDPSRKELLHEVAVEEDLAPFETSKSTAEAFKLRHGDCVTLLPIADSDNCRVYIKKGAVLMIPKAVPFDQVVAGRIPEGWDPARYGIPEEIVQQVDVTTLYALCCVSEAFLSAGIKDPYEIYQYIHVSELANCLGSGGGPMKVIQNMYRDRFLDRQIRGDIILEHFVNTMGAWVNMLLLSATGPLKTPVGACATAIESLDIGCEAIQNGRCKVAVVGGCDDYGEELAFEFANIKATANSTEELSKGRTPADISRPTASSRSGFAESAGCGVQILMSAALAIEMGLPIYGVVAYTHMASDQIGRSIPAPGKGILTAARENGQAKESPLLDLNFRRAVFDAEVALINKSHPKQATTLKPDHSETSNAASLRIRDAQNRWANNIRLSDPSISPIRASLATWGLTVDDIKVVSMHGTSTKANEVNEGNVINTQMRHLGRQMGNPLLAVCQKSLTGHPKAGAGAWQLNGCLQMMQENIVPGNRNADNIDKQLREFEHIVYPMESLRVPEIKATLLTSFGFGQKGAINIMVSPRYLFASLSNSDYEDYRSRTTKRQRSATPTFVSRIMKNNLVQVKTRPPWNDPEAMQNFFLDPNSRVVDGQITRAPRTAYKHQDISVPQSAAVSVNEALHAMLATTDHSSPAASASVGVDVEEISSINVDNPIFISRNFTLLERDYCLSAPDPRASFAGRWVAKEAAFKSLQTTSTGAGTAMDQIEILEVGGIPKVVRLTSQLHGHAHEVAFAQGITNIQITISHCNNTAIAVALALRKND.

A compositionally biased stretch (polar residues) spans 108–130 (SQPTQPQFEPTSPSHLTKRSPSP). The tract at residues 108-133 (SQPTQPQFEPTSPSHLTKRSPSPSKA) is disordered. Residues 143–221 (ELTLQAGHVI…ESFQPEFSGI (79 aa)) form the Carrier domain. An O-(pantetheine 4'-phosphoryl)serine modification is found at Ser-181. Residues 575-771 (HKAVLVTGAG…CGAVIGWTRG (197 aa)) form a beta-ketoacyl reductase region. A Ketosynthase family 3 (KS3) domain is found at 1011–1531 (KELLHEVAVE…QKGAINIMVS (521 aa)). Residues Cys-1197, His-1416, and His-1457 each act as for beta-ketoacyl synthase activity in the active site. Mg(2+) is bound by residues Asp-1650, Val-1651, and Glu-1652. Acetyl-CoA contacts are provided by residues 1650-1652 (DVE), Tyr-1676, Ser-1686, 1695-1705 (EAAFKSLQTTS), 1719-1722 (EVGG), and 1753-1755 (ISH). Mg(2+) is bound by residues Ser-1754 and His-1755.

It belongs to the thiolase-like superfamily. Fungal fatty acid synthetase subunit alpha family. As to quaternary structure, [Alpha(6)beta(6)] hexamers of two multifunctional subunits (alpha and beta).

It catalyses the reaction acetyl-CoA + n malonyl-CoA + 2n NADPH + 4n H(+) = a long-chain-acyl-CoA + n CoA + n CO2 + 2n NADP(+).. It carries out the reaction a fatty acyl-[ACP] + malonyl-[ACP] + H(+) = a 3-oxoacyl-[ACP] + holo-[ACP] + CO2. The catalysed reaction is a (3R)-hydroxyacyl-[ACP] + NADP(+) = a 3-oxoacyl-[ACP] + NADPH + H(+). The protein operates within secondary metabolite biosynthesis. Functionally, fatty acid synthase alpha subunit; part of the pki gene cluster that mediates the biosynthesis of 2,4-dihydroxy-3-methyl-6-(2-oxoundecyl)benzaldehyde. The first step in the pathway is the generation of the decanoyl starter unit by the FAS composed of subunits pkiB and pkiC, which is then transferred directly from the FAS to the SAT domain of the non-reducing polyketide synthase pkiA. PkiA condenses the decanoyyl starter unit with 4 malonyl-CoA units and performs one methylation step to yield 2,4-dihydroxy-3-methyl-6-(2-oxoundecyl)benzaldehyde. This chain is Fatty acid synthase alpha subunit pkiB, found in Emericella nidulans (strain FGSC A4 / ATCC 38163 / CBS 112.46 / NRRL 194 / M139) (Aspergillus nidulans).